Reading from the N-terminus, the 749-residue chain is Tryptophan 2-monooxygenase (749 aa).

4 residues coordinate FMN: serine 232, glutamate 252, lysine 260, and arginine 280. Arginine 280 serves as a coordination point for substrate.

It belongs to the tryptophan 2-monooxygenase family. FMN serves as cofactor.

The catalysed reaction is L-tryptophan + O2 = indole-3-acetamide + CO2 + H2O. Its pathway is plant hormone metabolism; auxin biosynthesis. The protein is Tryptophan 2-monooxygenase (aux1) of Rhizobium rhizogenes (Agrobacterium rhizogenes).